Consider the following 164-residue polypeptide: uncharacterized protein (164 aa).

Residues 144–164 are disordered; that stretch reads GFISPEKEHESEDMTSQSLVA.

This is an uncharacterized protein from Synechocystis sp. (strain ATCC 27184 / PCC 6803 / Kazusa).